Reading from the N-terminus, the 621-residue chain is Chaperone protein HscA homolog (621 aa).

This sequence belongs to the heat shock protein 70 family.

Chaperone involved in the maturation of iron-sulfur cluster-containing proteins. Has a low intrinsic ATPase activity which is markedly stimulated by HscB. In Azotobacter vinelandii (strain DJ / ATCC BAA-1303), this protein is Chaperone protein HscA homolog.